The chain runs to 222 residues: Deoxyribose-phosphate aldolase (222 aa).

Residue Asp93 is the Proton donor/acceptor of the active site. Lys156 (schiff-base intermediate with acetaldehyde) is an active-site residue. Lys186 acts as the Proton donor/acceptor in catalysis.

The protein belongs to the DeoC/FbaB aldolase family. DeoC type 1 subfamily.

The protein localises to the cytoplasm. It carries out the reaction 2-deoxy-D-ribose 5-phosphate = D-glyceraldehyde 3-phosphate + acetaldehyde. The protein operates within carbohydrate degradation; 2-deoxy-D-ribose 1-phosphate degradation; D-glyceraldehyde 3-phosphate and acetaldehyde from 2-deoxy-alpha-D-ribose 1-phosphate: step 2/2. Functionally, catalyzes a reversible aldol reaction between acetaldehyde and D-glyceraldehyde 3-phosphate to generate 2-deoxy-D-ribose 5-phosphate. This chain is Deoxyribose-phosphate aldolase, found in Corynebacterium glutamicum (strain ATCC 13032 / DSM 20300 / JCM 1318 / BCRC 11384 / CCUG 27702 / LMG 3730 / NBRC 12168 / NCIMB 10025 / NRRL B-2784 / 534).